The following is a 333-amino-acid chain: Lipoyl synthase (333 aa).

A compositionally biased stretch (polar residues) spans 1 to 15 (MSTLVESPVPSNDSQ). The interval 1 to 34 (MSTLVESPVPSNDSQAAAPAAYDPTQKQKSQAKT) is disordered. 7 residues coordinate [4Fe-4S] cluster: Cys-80, Cys-85, Cys-91, Cys-106, Cys-110, Cys-113, and Ser-320. The 219-residue stretch at 91-309 (CFGKGTATFM…EREAYAMGFT (219 aa)) folds into the Radical SAM core domain.

This sequence belongs to the radical SAM superfamily. Lipoyl synthase family. [4Fe-4S] cluster serves as cofactor.

It is found in the cytoplasm. The enzyme catalyses [[Fe-S] cluster scaffold protein carrying a second [4Fe-4S](2+) cluster] + N(6)-octanoyl-L-lysyl-[protein] + 2 oxidized [2Fe-2S]-[ferredoxin] + 2 S-adenosyl-L-methionine + 4 H(+) = [[Fe-S] cluster scaffold protein] + N(6)-[(R)-dihydrolipoyl]-L-lysyl-[protein] + 4 Fe(3+) + 2 hydrogen sulfide + 2 5'-deoxyadenosine + 2 L-methionine + 2 reduced [2Fe-2S]-[ferredoxin]. Its pathway is protein modification; protein lipoylation via endogenous pathway; protein N(6)-(lipoyl)lysine from octanoyl-[acyl-carrier-protein]: step 2/2. In terms of biological role, catalyzes the radical-mediated insertion of two sulfur atoms into the C-6 and C-8 positions of the octanoyl moiety bound to the lipoyl domains of lipoate-dependent enzymes, thereby converting the octanoylated domains into lipoylated derivatives. The protein is Lipoyl synthase of Bordetella parapertussis (strain 12822 / ATCC BAA-587 / NCTC 13253).